Reading from the N-terminus, the 471-residue chain is UDP-N-acetylmuramoylalanine--D-glutamate ligase (471 aa).

127–133 (GSNGKST) provides a ligand contact to ATP.

The protein belongs to the MurCDEF family.

Its subcellular location is the cytoplasm. The catalysed reaction is UDP-N-acetyl-alpha-D-muramoyl-L-alanine + D-glutamate + ATP = UDP-N-acetyl-alpha-D-muramoyl-L-alanyl-D-glutamate + ADP + phosphate + H(+). It functions in the pathway cell wall biogenesis; peptidoglycan biosynthesis. Functionally, cell wall formation. Catalyzes the addition of glutamate to the nucleotide precursor UDP-N-acetylmuramoyl-L-alanine (UMA). In Colwellia psychrerythraea (strain 34H / ATCC BAA-681) (Vibrio psychroerythus), this protein is UDP-N-acetylmuramoylalanine--D-glutamate ligase.